Consider the following 442-residue polypeptide: MSKKVFIKTFGCQMNEYDSDKMADVLGAAQGYESTDDPEQADLILFNTCSVREKAQEKVFSDLGRYKHLKERGVLIGVGGCVASQEGEEIIKRAPYVDVVFGPQTLHRLPELLNARAAKHKPQVDISFPEIEKFDHLPPARVEGSSAFVSIMEGCSKYCSYCVVPYTRGEEVSRPFEDVLIEVAGLADQGVKEVTLLGQNVNAYLGKMGDTAEIADFALLLEYVSEIPGIERIRYTTSHPNEFTPRLIEAYARLPKLVSHLHLPVQHGSDKILMAMKRGYTAMEYKSTIRKLRAIRPEMAMSSDFIVGFPGETEEDFQKMMKLIHDVRFDNSFSFIFSPRPGTPAANLHDDTPHEVKLRRLQELQAVINNNIKDISDERVGTVQRLLVEGLSKRDGSELMGRTECNRVVNFPGNERLIGQMIDVKITEARTFTLRGEVVVRH.

The 116-residue stretch at 3 to 118 folds into the MTTase N-terminal domain; it reads KKVFIKTFGC…LPELLNARAA (116 aa). Residues C12, C49, C81, C155, C159, and C162 each coordinate [4Fe-4S] cluster. The region spanning 141 to 374 is the Radical SAM core domain; that stretch reads RVEGSSAFVS…QAVINNNIKD (234 aa). One can recognise a TRAM domain in the interval 377-440; the sequence is DERVGTVQRL…TFTLRGEVVV (64 aa).

Belongs to the methylthiotransferase family. MiaB subfamily. Monomer. [4Fe-4S] cluster serves as cofactor.

It localises to the cytoplasm. The enzyme catalyses N(6)-dimethylallyladenosine(37) in tRNA + (sulfur carrier)-SH + AH2 + 2 S-adenosyl-L-methionine = 2-methylsulfanyl-N(6)-dimethylallyladenosine(37) in tRNA + (sulfur carrier)-H + 5'-deoxyadenosine + L-methionine + A + S-adenosyl-L-homocysteine + 2 H(+). In terms of biological role, catalyzes the methylthiolation of N6-(dimethylallyl)adenosine (i(6)A), leading to the formation of 2-methylthio-N6-(dimethylallyl)adenosine (ms(2)i(6)A) at position 37 in tRNAs that read codons beginning with uridine. The protein is tRNA-2-methylthio-N(6)-dimethylallyladenosine synthase of Delftia acidovorans (strain DSM 14801 / SPH-1).